The chain runs to 363 residues: UDP-N-acetylglucosamine--N-acetylmuramyl-(pentapeptide) pyrophosphoryl-undecaprenol N-acetylglucosamine transferase (363 aa).

UDP-N-acetyl-alpha-D-glucosamine contacts are provided by residues 10 to 12, N124, S195, I250, and Q295; that span reads TGG.

This sequence belongs to the glycosyltransferase 28 family. MurG subfamily.

The protein localises to the cell membrane. It carries out the reaction di-trans,octa-cis-undecaprenyl diphospho-N-acetyl-alpha-D-muramoyl-L-alanyl-D-glutamyl-meso-2,6-diaminopimeloyl-D-alanyl-D-alanine + UDP-N-acetyl-alpha-D-glucosamine = di-trans,octa-cis-undecaprenyl diphospho-[N-acetyl-alpha-D-glucosaminyl-(1-&gt;4)]-N-acetyl-alpha-D-muramoyl-L-alanyl-D-glutamyl-meso-2,6-diaminopimeloyl-D-alanyl-D-alanine + UDP + H(+). It functions in the pathway cell wall biogenesis; peptidoglycan biosynthesis. Cell wall formation. Catalyzes the transfer of a GlcNAc subunit on undecaprenyl-pyrophosphoryl-MurNAc-pentapeptide (lipid intermediate I) to form undecaprenyl-pyrophosphoryl-MurNAc-(pentapeptide)GlcNAc (lipid intermediate II). The protein is UDP-N-acetylglucosamine--N-acetylmuramyl-(pentapeptide) pyrophosphoryl-undecaprenol N-acetylglucosamine transferase of Halalkalibacterium halodurans (strain ATCC BAA-125 / DSM 18197 / FERM 7344 / JCM 9153 / C-125) (Bacillus halodurans).